Consider the following 103-residue polypeptide: Small ribosomal subunit protein uS10 (103 aa).

It belongs to the universal ribosomal protein uS10 family. In terms of assembly, part of the 30S ribosomal subunit.

Its function is as follows. Involved in the binding of tRNA to the ribosomes. This is Small ribosomal subunit protein uS10 from Bordetella avium (strain 197N).